Consider the following 339-residue polypeptide: Ketol-acid reductoisomerase (NADP(+)) (339 aa).

A KARI N-terminal Rossmann domain is found at 1 to 182 (MRVYYDRDAD…GGGRSGIIET (182 aa)). NADP(+)-binding positions include 24–27 (YGSQ), lysine 48, serine 51, threonine 53, and 83–86 (DELQ). The active site involves histidine 108. Glycine 134 provides a ligand contact to NADP(+). A KARI C-terminal knotted domain is found at 183-328 (NFKEECETDL…AKLRGMMPWI (146 aa)). Positions 191, 195, 227, and 231 each coordinate Mg(2+). Serine 252 serves as a coordination point for substrate.

Belongs to the ketol-acid reductoisomerase family. Requires Mg(2+) as cofactor.

It carries out the reaction (2R)-2,3-dihydroxy-3-methylbutanoate + NADP(+) = (2S)-2-acetolactate + NADPH + H(+). The enzyme catalyses (2R,3R)-2,3-dihydroxy-3-methylpentanoate + NADP(+) = (S)-2-ethyl-2-hydroxy-3-oxobutanoate + NADPH + H(+). The protein operates within amino-acid biosynthesis; L-isoleucine biosynthesis; L-isoleucine from 2-oxobutanoate: step 2/4. Its pathway is amino-acid biosynthesis; L-valine biosynthesis; L-valine from pyruvate: step 2/4. Its function is as follows. Involved in the biosynthesis of branched-chain amino acids (BCAA). Catalyzes an alkyl-migration followed by a ketol-acid reduction of (S)-2-acetolactate (S2AL) to yield (R)-2,3-dihydroxy-isovalerate. In the isomerase reaction, S2AL is rearranged via a Mg-dependent methyl migration to produce 3-hydroxy-3-methyl-2-ketobutyrate (HMKB). In the reductase reaction, this 2-ketoacid undergoes a metal-dependent reduction by NADPH to yield (R)-2,3-dihydroxy-isovalerate. The protein is Ketol-acid reductoisomerase (NADP(+)) of Sinorhizobium medicae (strain WSM419) (Ensifer medicae).